The primary structure comprises 193 residues: Holliday junction branch migration complex subunit RuvA (193 aa).

Residues 1–64 (MIGRIAGVLL…EDAHLLYGFL (64 aa)) form a domain I region. A domain II region spans residues 65–139 (TPQERSTFRE…GKLGADLGAM (75 aa)). A flexible linker region spans residues 139-143 (MAGAA). The interval 144-193 (SQSDHASDILNALLALGYSEKEGLAAIKNVPAGTGVSEGIKLALKALSKA) is domain III.

The protein belongs to the RuvA family. As to quaternary structure, homotetramer. Forms an RuvA(8)-RuvB(12)-Holliday junction (HJ) complex. HJ DNA is sandwiched between 2 RuvA tetramers; dsDNA enters through RuvA and exits via RuvB. An RuvB hexamer assembles on each DNA strand where it exits the tetramer. Each RuvB hexamer is contacted by two RuvA subunits (via domain III) on 2 adjacent RuvB subunits; this complex drives branch migration. In the full resolvosome a probable DNA-RuvA(4)-RuvB(12)-RuvC(2) complex forms which resolves the HJ.

The protein localises to the cytoplasm. In terms of biological role, the RuvA-RuvB-RuvC complex processes Holliday junction (HJ) DNA during genetic recombination and DNA repair, while the RuvA-RuvB complex plays an important role in the rescue of blocked DNA replication forks via replication fork reversal (RFR). RuvA specifically binds to HJ cruciform DNA, conferring on it an open structure. The RuvB hexamer acts as an ATP-dependent pump, pulling dsDNA into and through the RuvAB complex. HJ branch migration allows RuvC to scan DNA until it finds its consensus sequence, where it cleaves and resolves the cruciform DNA. This chain is Holliday junction branch migration complex subunit RuvA, found in Paraburkholderia phymatum (strain DSM 17167 / CIP 108236 / LMG 21445 / STM815) (Burkholderia phymatum).